Reading from the N-terminus, the 895-residue chain is Isoleucine--tRNA ligase (895 aa).

The 'HIGH' region signature appears at 57–67 (PYANGSIHVGH). Position 549 (glutamate 549) interacts with L-isoleucyl-5'-AMP. The short motif at 590–594 (KMSKS) is the 'KMSKS' region element. Lysine 593 is an ATP binding site. Residues cysteine 869, cysteine 872, cysteine 888, and cysteine 891 each contribute to the Zn(2+) site.

It belongs to the class-I aminoacyl-tRNA synthetase family. IleS type 1 subfamily. As to quaternary structure, monomer. It depends on Zn(2+) as a cofactor.

It localises to the cytoplasm. The catalysed reaction is tRNA(Ile) + L-isoleucine + ATP = L-isoleucyl-tRNA(Ile) + AMP + diphosphate. In terms of biological role, catalyzes the attachment of isoleucine to tRNA(Ile). As IleRS can inadvertently accommodate and process structurally similar amino acids such as valine, to avoid such errors it has two additional distinct tRNA(Ile)-dependent editing activities. One activity is designated as 'pretransfer' editing and involves the hydrolysis of activated Val-AMP. The other activity is designated 'posttransfer' editing and involves deacylation of mischarged Val-tRNA(Ile). The sequence is that of Isoleucine--tRNA ligase from Mycoplasma genitalium (strain ATCC 33530 / DSM 19775 / NCTC 10195 / G37) (Mycoplasmoides genitalium).